Consider the following 282-residue polypeptide: 3-hydroxyanthranilate 3,4-dioxygenase (282 aa).

The tract at residues 1–160 (MAMAINVKKW…SKQYKSGKPD (160 aa)) is domain A (catalytic). R43 contacts O2. Residues H47, E53, and H91 each contribute to the Fe cation site. E53 lines the substrate pocket. Substrate contacts are provided by R95 and E105. The interval 161-177 (PDQPKAKMPFCLSTEQV) is linker. A domain B region spans residues 178 to 282 (MEPFSFQHWL…LSTSQVPLPM (105 aa)).

It belongs to the 3-HAO family. In terms of assembly, monomer. The cofactor is Fe(2+).

The protein localises to the cytoplasm. The protein resides in the cytosol. The catalysed reaction is 3-hydroxyanthranilate + O2 = (2Z,4Z)-2-amino-3-carboxymuconate 6-semialdehyde. Its pathway is cofactor biosynthesis; NAD(+) biosynthesis; quinolinate from L-kynurenine: step 3/3. Functionally, catalyzes the oxidative ring opening of 3-hydroxyanthranilate to 2-amino-3-carboxymuconate semialdehyde, which spontaneously cyclizes to quinolinate. The chain is 3-hydroxyanthranilate 3,4-dioxygenase (haao) from Xenopus laevis (African clawed frog).